Here is a 398-residue protein sequence, read N- to C-terminus: Chalcone synthase 1 (398 aa).

58–65 is a binding site for CoA; sequence KFKRMCDK. Catalysis depends on Cys167, which acts as the Acyl-thioester intermediate. Substrate-binding positions include Thr200 and 219–220; that span reads GD. Ala311 contacts CoA.

It belongs to the thiolase-like superfamily. Chalcone/stilbene synthases family. In terms of assembly, homodimer.

It catalyses the reaction (E)-4-coumaroyl-CoA + 3 malonyl-CoA + 3 H(+) = 2',4,4',6'-tetrahydroxychalcone + 3 CO2 + 4 CoA. It participates in secondary metabolite biosynthesis; flavonoid biosynthesis. The primary product of this enzyme is 4,2',4',6'-tetrahydroxychalcone (also termed naringenin-chalcone or chalcone) which can under specific conditions spontaneously isomerize into naringenin. This Oryza sativa subsp. indica (Rice) protein is Chalcone synthase 1 (CHS1).